The following is a 210-amino-acid chain: Na(+)-translocating NADH-quinone reductase subunit D (210 aa).

Helical transmembrane passes span 14-34 (PIVN…ALAV), 42-62 (LVMA…ISMI), 72-92 (IIVQ…LLQA), 103-123 (VFVG…AYAM), 131-151 (FMDG…VGFV), and 178-198 (NGLL…IWII).

This sequence belongs to the NqrDE/RnfAE family. Composed of six subunits; NqrA, NqrB, NqrC, NqrD, NqrE and NqrF.

It is found in the cell inner membrane. The catalysed reaction is a ubiquinone + n Na(+)(in) + NADH + H(+) = a ubiquinol + n Na(+)(out) + NAD(+). Functionally, NQR complex catalyzes the reduction of ubiquinone-1 to ubiquinol by two successive reactions, coupled with the transport of Na(+) ions from the cytoplasm to the periplasm. NqrA to NqrE are probably involved in the second step, the conversion of ubisemiquinone to ubiquinol. This chain is Na(+)-translocating NADH-quinone reductase subunit D, found in Shewanella oneidensis (strain ATCC 700550 / JCM 31522 / CIP 106686 / LMG 19005 / NCIMB 14063 / MR-1).